Reading from the N-terminus, the 427-residue chain is 3-phosphoshikimate 1-carboxyvinyltransferase (427 aa).

3-phosphoshikimate-binding residues include lysine 22, serine 23, and arginine 27. Lysine 22 lines the phosphoenolpyruvate pocket. Phosphoenolpyruvate is bound by residues glycine 96 and arginine 124. 7 residues coordinate 3-phosphoshikimate: serine 169, serine 170, glutamine 171, serine 197, aspartate 313, asparagine 336, and lysine 340. Glutamine 171 serves as a coordination point for phosphoenolpyruvate. Aspartate 313 (proton acceptor) is an active-site residue. Phosphoenolpyruvate-binding residues include arginine 344, arginine 386, and lysine 411.

It belongs to the EPSP synthase family. As to quaternary structure, monomer.

The protein resides in the cytoplasm. The enzyme catalyses 3-phosphoshikimate + phosphoenolpyruvate = 5-O-(1-carboxyvinyl)-3-phosphoshikimate + phosphate. It participates in metabolic intermediate biosynthesis; chorismate biosynthesis; chorismate from D-erythrose 4-phosphate and phosphoenolpyruvate: step 6/7. Catalyzes the transfer of the enolpyruvyl moiety of phosphoenolpyruvate (PEP) to the 5-hydroxyl of shikimate-3-phosphate (S3P) to produce enolpyruvyl shikimate-3-phosphate and inorganic phosphate. This Salmonella agona (strain SL483) protein is 3-phosphoshikimate 1-carboxyvinyltransferase.